The sequence spans 81 residues: ATP synthase subunit c (81 aa).

Helical transmembrane passes span Ile5–Gly25 and Val57–Ala77.

The protein belongs to the ATPase C chain family. In terms of assembly, F-type ATPases have 2 components, F(1) - the catalytic core - and F(0) - the membrane proton channel. F(1) has five subunits: alpha(3), beta(3), gamma(1), delta(1), epsilon(1). F(0) has three main subunits: a(1), b(2) and c(10-14). The alpha and beta chains form an alternating ring which encloses part of the gamma chain. F(1) is attached to F(0) by a central stalk formed by the gamma and epsilon chains, while a peripheral stalk is formed by the delta and b chains.

It localises to the cell membrane. Its function is as follows. F(1)F(0) ATP synthase produces ATP from ADP in the presence of a proton or sodium gradient. F-type ATPases consist of two structural domains, F(1) containing the extramembraneous catalytic core and F(0) containing the membrane proton channel, linked together by a central stalk and a peripheral stalk. During catalysis, ATP synthesis in the catalytic domain of F(1) is coupled via a rotary mechanism of the central stalk subunits to proton translocation. Functionally, key component of the F(0) channel; it plays a direct role in translocation across the membrane. A homomeric c-ring of between 10-14 subunits forms the central stalk rotor element with the F(1) delta and epsilon subunits. This is ATP synthase subunit c from Mycolicibacterium gilvum (strain PYR-GCK) (Mycobacterium gilvum (strain PYR-GCK)).